The chain runs to 728 residues: Probable 3',5'-cyclic phosphodiesterase pde-5 (728 aa).

The 158-residue stretch at 214–371 (SMDAVIIKVM…HHAKLYDKIR (158 aa)) folds into the GAF domain. The PDEase domain occupies 390-709 (CNADEVNKLK…KKWEELAEEQ (320 aa)). The active-site Proton donor is the His465. Residues His469, His503, Asp504, and Asp614 each coordinate a divalent metal cation. A coiled-coil region spans residues 691–728 (MRERCEYNAKKWEELAEEQRKKQEALAQQNGEANETQE). The tract at residues 708 to 728 (EQRKKQEALAQQNGEANETQE) is disordered. Residues 716–728 (LAQQNGEANETQE) are compositionally biased toward polar residues.

Belongs to the cyclic nucleotide phosphodiesterase family. Requires a divalent metal cation as cofactor.

It catalyses the reaction a nucleoside 3',5'-cyclic phosphate + H2O = a nucleoside 5'-phosphate + H(+). Its function is as follows. Redundantly with pde-1, plays a role in the AFD thermosensory neurons to regulate microvilli receptive ending morphology, possibly by regulating cGMP levels. The chain is Probable 3',5'-cyclic phosphodiesterase pde-5 (pde-5) from Caenorhabditis elegans.